The chain runs to 406 residues: Renin (406 aa).

The signal sequence occupies residues 1-23; that stretch reads MDGWRRMPRWGLLLLLWGSCTFG. Residues 24–66 constitute a propeptide, activation peptide; that stretch reads LPTDTTTFKRIFLKRMPSIRESLKERGVDMARLGPEWSQPMKR. Asparagine 71 carries N-linked (GlcNAc...) asparagine glycosylation. Residues 86-403 form the Peptidase A1 domain; sequence YYGEIGIGTP…DRRNNRIGFA (318 aa). Residue aspartate 104 is part of the active site. Cysteine 117 and cysteine 124 are disulfide-bonded. The N-linked (GlcNAc...) asparagine glycan is linked to asparagine 141. A disulfide bond links cysteine 283 and cysteine 287. Residue aspartate 292 is part of the active site. An intrachain disulfide couples cysteine 325 to cysteine 362.

It belongs to the peptidase A1 family. Interacts with ATP6AP2.

Its subcellular location is the secreted. It is found in the membrane. The catalysed reaction is Cleavage of Leu-|-Xaa bond in angiotensinogen to generate angiotensin I.. Interaction with ATP6AP2 results in a 5-fold increased efficiency in angiotensinogen processing. In terms of biological role, renin is a highly specific endopeptidase, whose only known function is to generate angiotensin I from angiotensinogen in the plasma, initiating a cascade of reactions that produce an elevation of blood pressure and increased sodium retention by the kidney. This is Renin (REN) from Macaca fascicularis (Crab-eating macaque).